The sequence spans 131 residues: Small ribosomal subunit protein bS6 (131 aa).

The interval 94–131 (DAVTEESQLAKNADEKRARKATTRRPDSNDDNDNHSDD) is disordered. Over residues 117 to 131 (RRPDSNDDNDNHSDD) the composition is skewed to basic and acidic residues.

It belongs to the bacterial ribosomal protein bS6 family.

Binds together with bS18 to 16S ribosomal RNA. The chain is Small ribosomal subunit protein bS6 from Psychrobacter cryohalolentis (strain ATCC BAA-1226 / DSM 17306 / VKM B-2378 / K5).